A 242-amino-acid chain; its full sequence is Carboxy-S-adenosyl-L-methionine synthase (242 aa).

S-adenosyl-L-methionine-binding positions include Y38, 63–65 (GCS), 88–89 (DN), 116–117 (DL), and R199.

Belongs to the class I-like SAM-binding methyltransferase superfamily. Cx-SAM synthase family. In terms of assembly, homodimer.

The catalysed reaction is prephenate + S-adenosyl-L-methionine = carboxy-S-adenosyl-L-methionine + 3-phenylpyruvate + H2O. Catalyzes the conversion of S-adenosyl-L-methionine (SAM) to carboxy-S-adenosyl-L-methionine (Cx-SAM). The chain is Carboxy-S-adenosyl-L-methionine synthase from Methylococcus capsulatus (strain ATCC 33009 / NCIMB 11132 / Bath).